The primary structure comprises 308 residues: F420-non-reducing hydrogenase subunit G (308 aa).

The protein belongs to the [NiFe]/[NiFeSe] hydrogenase small subunit family. In terms of assembly, the F420-non-reducing hydrogenase is composed of three subunits; MvhA, MvhD and MvhG. It forms a complex with the heterodisulfide reductase (hdr).

Its function is as follows. Part of a complex that provides reducing equivalents for heterodisulfide reductase. This is F420-non-reducing hydrogenase subunit G (mvhG) from Methanothermobacter marburgensis (strain ATCC BAA-927 / DSM 2133 / JCM 14651 / NBRC 100331 / OCM 82 / Marburg) (Methanobacterium thermoautotrophicum).